The sequence spans 488 residues: Probable malate:quinone oxidoreductase (488 aa).

It belongs to the MQO family. The cofactor is FAD.

The catalysed reaction is (S)-malate + a quinone = a quinol + oxaloacetate. Its pathway is carbohydrate metabolism; tricarboxylic acid cycle; oxaloacetate from (S)-malate (quinone route): step 1/1. The protein is Probable malate:quinone oxidoreductase of Neisseria meningitidis serogroup C (strain 053442).